The sequence spans 472 residues: Gamma-aminobutyric acid receptor subunit beta-2 (472 aa).

The signal sequence occupies residues 1 to 23; sequence RVRKKDYFGIWSFPLIIAAVCAQ. At 24–239 the chain is on the extracellular side; it reads SVNDPSNMSL…LSLSFKLKRN (216 aa). N-linked (GlcNAc...) asparagine glycosylation is found at asparagine 30 and asparagine 102. Residue tyrosine 119 coordinates histamine. An intrachain disulfide couples cysteine 158 to cysteine 172. Histamine is bound by residues 178–179 and threonine 224; that span reads SY. Residues tyrosine 179 and threonine 224 each coordinate 4-aminobutanoate. Helical transmembrane passes span 240–260, 271–290, and 309–329; these read IGYF…LSWV, ARVA…NTHL, and GCFV…YIFF. An etomidate binding; allosteric effector region spans residues 287-308; sequence NTHLRETLPKIPYVKAIDMYLM. Topologically, residues 330-450 are cytoplasmic; that stretch reads GRGPQRQKKA…LTDVNAIDRW (121 aa). Tyrosine 401 is subject to Phosphotyrosine. The helical transmembrane segment at 451–471 threads the bilayer; that stretch reads SRIFFPVVFSFFNIVYWLYYV.

Belongs to the ligand-gated ion channel (TC 1.A.9) family. Gamma-aminobutyric acid receptor (TC 1.A.9.5) subfamily. GABRB2 sub-subfamily. As to quaternary structure, heteropentamer, formed by a combination of alpha (GABRA1-6), beta (GABRB1-3), gamma (GABRG1-3), delta (GABRD), epsilon (GABRE), rho (GABRR1-3), pi (GABRP) and theta (GABRQ) chains, each subunit exhibiting distinct physiological and pharmacological properties. Interacts with UBQLN1. May interact with KIF21B. Identified in a complex of 720 kDa composed of LHFPL4, NLGN2, GABRA1, GABRB2, GABRG2 and GABRB3. Glycosylated.

It localises to the postsynaptic cell membrane. The protein localises to the cell membrane. Its subcellular location is the cytoplasmic vesicle membrane. It carries out the reaction chloride(in) = chloride(out). With respect to regulation, allosterically activated by benzodiazepines. Allosterically activated by the anesthetic etomidate. Inhibited by the antagonist bicuculline. Potentiated by histamine. Functionally, beta subunit of the heteropentameric ligand-gated chloride channel gated by gamma-aminobutyric acid (GABA), a major inhibitory neurotransmitter in the brain. GABA-gated chloride channels, also named GABA(A) receptors (GABAAR), consist of five subunits arranged around a central pore and contain GABA active binding site(s) located at the alpha and beta subunit interface(s). When activated by GABA, GABAARs selectively allow the flow of chloride anions across the cell membrane down their electrochemical gradient. Chloride influx into the postsynaptic neuron following GABAAR opening decreases the neuron ability to generate a new action potential, thereby reducing nerve transmission. GABAARs containing alpha-1 and beta-2 or -3 subunits exhibit synaptogenic activity; the gamma-2 subunit being necessary but not sufficient to induce rapid synaptic contacts formation. Extrasynaptic beta-2 receptors contribute to the tonic GABAergic inhibition. Beta-containing GABAARs can simultaneously bind GABA and histamine where histamine binds at the interface of two neighboring beta subunits, which may be involved in the regulation of sleep and wakefulness. The chain is Gamma-aminobutyric acid receptor subunit beta-2 (GABRB2) from Bos taurus (Bovine).